Here is an 87-residue protein sequence, read N- to C-terminus: Apolipoprotein C-I (87 aa).

A signal peptide spans Met-1–Ala-26.

The protein belongs to the apolipoprotein C1 family.

It localises to the secreted. In terms of biological role, inhibitor of lipoprotein binding to the low density lipoprotein (LDL) receptor, LDL receptor-related protein, and very low density lipoprotein (VLDL) receptor. Associates with high density lipoproteins (HDL) and the triacylglycerol-rich lipoproteins in the plasma and makes up about 10% of the protein of the VLDL and 2% of that of HDL. Appears to interfere directly with fatty acid uptake and is also the major plasma inhibitor of cholesteryl ester transfer protein (CETP). Binds free fatty acids and reduces their intracellular esterification. Modulates the interaction of APOE with beta-migrating VLDL and inhibits binding of beta-VLDL to the LDL receptor-related protein. The chain is Apolipoprotein C-I (APOC1) from Pteropus alecto (Black flying fox).